A 196-amino-acid chain; its full sequence is Alpha-crystallin A chain (196 aa).

Met-1 carries the post-translational modification N-acetylmethionine. The segment at 1 to 63 is required for complex formation with BFSP1 and BFSP2; the sequence is MDVTIQHPWF…RTVLDSCISE (63 aa). Gln-6 is subject to Deamidated glutamine; partial. Ser-45 is subject to Phosphoserine. Gln-50 bears the Deamidated glutamine; partial mark. The sHSP domain occupies 76–185; the sequence is HAGNPENNPI…GHSERAIPVS (110 aa). N6-acetyllysine is present on residues Lys-93 and Lys-122. His-123 provides a ligand contact to Zn(2+). The residue at position 124 (Asn-124) is a Deamidated asparagine; partial. Zn(2+)-binding residues include Glu-125 and His-130. The residue at position 145 (Ser-145) is a Phosphoserine. Residue Gln-170 is modified to Deamidated glutamine; partial. A disordered region spans residues 170–196; that stretch reads QSGLDAGHSERAIPVSQEEKPSSAPLF. Residues 176-190 show a composition bias toward basic and acidic residues; that stretch reads GHSERAIPVSQEEKP. Position 177 (His-177) interacts with Zn(2+). O-linked (GlcNAc) serine glycosylation is present at Ser-185.

Belongs to the small heat shock protein (HSP20) family. As to quaternary structure, heteromer composed of three CRYAA and one CRYAB subunits. Inter-subunit bridging via zinc ions enhances stability, which is crucial as there is no protein turn over in the lens. Can also form homodimers and homotetramers (dimers of dimers) which serve as the building blocks of homooligomers. Within homooligomers, the zinc-binding motif is created from residues of 3 different molecules. His-123 and Glu-125 from one molecule are ligands of the zinc ion, and His-130 and His-177 residues from additional molecules complete the site with tetrahedral coordination geometry. Part of a complex required for lens intermediate filament formation composed of BFSP1, BFSP2 and CRYAA. In terms of processing, acetylation at Lys-93 may increase chaperone activity. Post-translationally, undergoes age-dependent proteolytical cleavage at the C-terminus.

Its subcellular location is the cytoplasm. It is found in the nucleus. Contributes to the transparency and refractive index of the lens. Acts as a chaperone, preventing aggregation of various proteins under a wide range of stress conditions. Required for the correct formation of lens intermediate filaments as part of a complex composed of BFSP1, BFSP2 and CRYAA. The sequence is that of Alpha-crystallin A chain (CRYAA) from Spalax ehrenbergi (Middle East blind mole rat).